A 275-amino-acid chain; its full sequence is Bifunctional protein FolD (275 aa).

Residues 161-163 (GRS), Ser186, and Thr227 each bind NADP(+).

The protein belongs to the tetrahydrofolate dehydrogenase/cyclohydrolase family. As to quaternary structure, homodimer.

The enzyme catalyses (6R)-5,10-methylene-5,6,7,8-tetrahydrofolate + NADP(+) = (6R)-5,10-methenyltetrahydrofolate + NADPH. It carries out the reaction (6R)-5,10-methenyltetrahydrofolate + H2O = (6R)-10-formyltetrahydrofolate + H(+). It participates in one-carbon metabolism; tetrahydrofolate interconversion. Functionally, catalyzes the oxidation of 5,10-methylenetetrahydrofolate to 5,10-methenyltetrahydrofolate and then the hydrolysis of 5,10-methenyltetrahydrofolate to 10-formyltetrahydrofolate. This Parafrankia sp. (strain EAN1pec) protein is Bifunctional protein FolD.